Reading from the N-terminus, the 396-residue chain is Elongation factor Tu (396 aa).

Residues 10–206 (KPHVNVGTIG…ALDTYIPEPE (197 aa)) form the tr-type G domain. Residues 19-26 (GHVDHGKT) are G1. 19–26 (GHVDHGKT) serves as a coordination point for GTP. Threonine 26 contributes to the Mg(2+) binding site. Positions 60-64 (GITIN) are G2. A G3 region spans residues 81-84 (DCPG). GTP-binding positions include 81–85 (DCPGH) and 136–139 (NKCD). The interval 136-139 (NKCD) is G4. The interval 174–176 (SAL) is G5.

It belongs to the TRAFAC class translation factor GTPase superfamily. Classic translation factor GTPase family. EF-Tu/EF-1A subfamily. As to quaternary structure, monomer.

It is found in the cytoplasm. The catalysed reaction is GTP + H2O = GDP + phosphate + H(+). GTP hydrolase that promotes the GTP-dependent binding of aminoacyl-tRNA to the A-site of ribosomes during protein biosynthesis. This chain is Elongation factor Tu, found in Acinetobacter baylyi (strain ATCC 33305 / BD413 / ADP1).